We begin with the raw amino-acid sequence, 443 residues long: MVHGRVSRLSVHDVRFPTSLGGHGSDAMHTDPDYSAAYVVLETDAEDGLKGYGITFTLGRGTEVVVCAVNALAPHVLNKDLGEIVGDFRGFYRQLTSDGQLRWIGPEKGVVHLATAAVLNAVWDLWAKQEGKPLWKLLVDMDPRTLVSCIDFRYITDVLTEEEACEILRQSQVGKKEREEQMLAHGYPAYTTSCAWLGYPDATLKQLCSEALKDGWTRFKVKVGADLQDDIRRCRLVRNMIGPEKTLMMDANQRWDVPEAVEWMTKLAEFKPLWIEEPTSPDDILGHAAISKALAPLGIGVATGEQCHNRVIFKQLLQAKALKFLQIDSCRLGSVNENLSVLLMAKKFEIPVCPHAGGVGLCELVQHLIIFDFISVSASLQDRMCEYVDHLHEHFKYPVLIREAAYMPPKDAGYSTEMKEDSVKRHRYPDGEVWKKLLSAQGN.

Residues 24–26 and Y34 contribute to the substrate site; that span reads GSD. S148 is modified (phosphoserine). K220 is a substrate binding site. Catalysis depends on K222, which acts as the Proton donor/acceptor. Residue D250 participates in Mg(2+) binding. Substrate contacts are provided by residues N252, E276, E305, 355–357, and E386; that span reads HAG. Mg(2+)-binding residues include E276 and E305. H355 is a catalytic residue.

It belongs to the mandelate racemase/muconate lactonizing enzyme family. ENOSF1 subfamily. Mg(2+) is required as a cofactor. Could be sumoylated.

The protein localises to the mitochondrion. It catalyses the reaction L-fuconate = 2-dehydro-3-deoxy-L-fuconate + H2O. Functionally, plays a role in the catabolism of L-fucose, a sugar that is part of the carbohydrates that are attached to cellular glycoproteins. Catalyzes the dehydration of L-fuconate to 2-keto-3-deoxy-L-fuconate by the abstraction of the 2-proton to generate an enediolate intermediate that is stabilized by the magnesium ion. May down-regulate thymidylate synthase activity, possibly already at the RNA level, by promoting the degradation of TYMS mRNA via an antisense RNA-based mechanism. This Bos taurus (Bovine) protein is Mitochondrial enolase superfamily member 1 (ENOSF1).